Consider the following 110-residue polypeptide: uncharacterized protein (110 aa).

The next 2 helical transmembrane spans lie at 21–41 (IQLALANFFAISCLWLKPQIC) and 63–83 (PSMIHFLPLISLTFAFSIIVV).

The protein localises to the membrane. This is an uncharacterized protein from Saccharomyces cerevisiae (strain ATCC 204508 / S288c) (Baker's yeast).